Here is a 252-residue protein sequence, read N- to C-terminus: Trans-aconitate 2-methyltransferase (252 aa).

This sequence belongs to the methyltransferase superfamily. Tam family.

It is found in the cytoplasm. The enzyme catalyses trans-aconitate + S-adenosyl-L-methionine = (E)-3-(methoxycarbonyl)pent-2-enedioate + S-adenosyl-L-homocysteine. Functionally, catalyzes the S-adenosylmethionine monomethyl esterification of trans-aconitate. This chain is Trans-aconitate 2-methyltransferase, found in Escherichia coli O139:H28 (strain E24377A / ETEC).